Consider the following 236-residue polypeptide: Ureidoacrylate amidohydrolase RutB (236 aa).

D24 functions as the Proton acceptor in the catalytic mechanism. Residue K133 is part of the active site. The Nucleophile role is filled by C166.

Belongs to the isochorismatase family. RutB subfamily.

It catalyses the reaction (Z)-3-ureidoacrylate + H2O + H(+) = (Z)-3-aminoacrylate + NH4(+) + CO2. The enzyme catalyses (Z)-3-ureidoacrylate + H2O = (Z)-3-aminoacrylate + carbamate + H(+). The catalysed reaction is (Z)-2-methylureidoacrylate + H2O + H(+) = (Z)-2-methylaminoacrylate + NH4(+) + CO2. In terms of biological role, hydrolyzes ureidoacrylate to form aminoacrylate and carbamate. The carbamate hydrolyzes spontaneously, thereby releasing one of the nitrogen atoms of the pyrimidine ring as ammonia and one of its carbon atoms as CO2. The protein is Ureidoacrylate amidohydrolase RutB of Klebsiella variicola (strain At-22).